A 188-amino-acid chain; its full sequence is NADH-quinone oxidoreductase subunit I (188 aa).

2 consecutive 4Fe-4S ferredoxin-type domains span residues 44–74 (LNRY…VEGA) and 90–119 (QVYQ…MTNE). The [4Fe-4S] cluster site is built by cysteine 54, cysteine 57, cysteine 60, cysteine 64, cysteine 99, cysteine 102, cysteine 105, and cysteine 109. The disordered stretch occupies residues 167 to 188 (TGGAAAAAQDESEVDDTAGDRP). Positions 176–188 (DESEVDDTAGDRP) are enriched in acidic residues.

It belongs to the complex I 23 kDa subunit family. As to quaternary structure, NDH-1 is composed of 14 different subunits. Subunits NuoA, H, J, K, L, M, N constitute the membrane sector of the complex. It depends on [4Fe-4S] cluster as a cofactor.

Its subcellular location is the cell membrane. The enzyme catalyses a quinone + NADH + 5 H(+)(in) = a quinol + NAD(+) + 4 H(+)(out). NDH-1 shuttles electrons from NADH, via FMN and iron-sulfur (Fe-S) centers, to quinones in the respiratory chain. The immediate electron acceptor for the enzyme in this species is believed to be ubiquinone. Couples the redox reaction to proton translocation (for every two electrons transferred, four hydrogen ions are translocated across the cytoplasmic membrane), and thus conserves the redox energy in a proton gradient. The chain is NADH-quinone oxidoreductase subunit I from Rhodococcus jostii (strain RHA1).